The primary structure comprises 1067 residues: TBC1 domain family member 31 (1067 aa).

6 WD repeats span residues 36-75 (GKVVRFLHVTFDTTGDCFLAGDHHGNIYLFDISRNRFRLV), 76-119 (LKTG…SWMR), 120-161 (GHEG…KLNI), 162-201 (RQSVGIQKVFFLPLSNTILSCFSDDSIFAWECDTLFCKYQ), 202-249 (LPLP…RVIQ), and 250-288 (MPSQVRTIRQLEFLPDSFDGGASQTLGVLSQDGMMRFIN). Residues 419–594 (EYPAKYRMFV…RLFDNIFSNH (176 aa)) enclose the Rab-GAP TBC domain. Positions 724-773 (QQELLQKAEEQRKHVLEQEEEKLTQQRAKLAAMKRELKVKELQLLDATRR) form a coiled coil. Composition is skewed to basic and acidic residues over residues 896-912 (KADAERERSRGGVEELQ) and 926-937 (MREEAHRKKDEA). Disordered regions lie at residues 896-955 (KADA…HSDG) and 1045-1067 (AARAKEGSSASSQTVCTPTPVSP). 2 stretches are compositionally biased toward polar residues: residues 941–953 (IQESLQPRPSTHS) and 1052–1067 (SSASSQTVCTPTPVSP).

It is found in the cytoplasm. Its subcellular location is the cytoskeleton. It localises to the microtubule organizing center. The protein resides in the centrosome. The protein localises to the centriolar satellite. It is found in the cilium basal body. Its function is as follows. Molecular adapter which is involved in cilium biogenesis. Part of a functional complex including OFD1 a centriolar protein involved in cilium assembly. Could regulate the cAMP-dependent phosphorylation of OFD1, and its subsequent ubiquitination by PJA2 which ultimately leads to its proteasomal degradation. The polypeptide is TBC1 domain family member 31 (Oryzias latipes (Japanese rice fish)).